The chain runs to 431 residues: Glutamate-1-semialdehyde 2,1-aminomutase (431 aa).

The residue at position 269 (lysine 269) is an N6-(pyridoxal phosphate)lysine.

It belongs to the class-III pyridoxal-phosphate-dependent aminotransferase family. HemL subfamily. As to quaternary structure, homodimer. Pyridoxal 5'-phosphate is required as a cofactor.

The protein localises to the cytoplasm. It carries out the reaction (S)-4-amino-5-oxopentanoate = 5-aminolevulinate. Its pathway is porphyrin-containing compound metabolism; protoporphyrin-IX biosynthesis; 5-aminolevulinate from L-glutamyl-tRNA(Glu): step 2/2. It functions in the pathway porphyrin-containing compound metabolism; chlorophyll biosynthesis. The chain is Glutamate-1-semialdehyde 2,1-aminomutase from Chlorobaculum parvum (strain DSM 263 / NCIMB 8327) (Chlorobium vibrioforme subsp. thiosulfatophilum).